The following is a 343-amino-acid chain: Protein RecA (343 aa).

66 to 73 (GPESSGKT) is an ATP binding site.

Belongs to the RecA family.

It localises to the cytoplasm. Its function is as follows. Can catalyze the hydrolysis of ATP in the presence of single-stranded DNA, the ATP-dependent uptake of single-stranded DNA by duplex DNA, and the ATP-dependent hybridization of homologous single-stranded DNAs. It interacts with LexA causing its activation and leading to its autocatalytic cleavage. The polypeptide is Protein RecA (Rickettsia bellii (strain OSU 85-389)).